A 164-amino-acid chain; its full sequence is Putative 4-hydroxy-4-methyl-2-oxoglutarate aldolase (164 aa).

Residues 80–83 (GGNL) and arginine 102 contribute to the substrate site. Position 103 (aspartate 103) interacts with a divalent metal cation.

Belongs to the class II aldolase/RraA-like family. Homotrimer. It depends on a divalent metal cation as a cofactor.

It catalyses the reaction 4-hydroxy-4-methyl-2-oxoglutarate = 2 pyruvate. It carries out the reaction oxaloacetate + H(+) = pyruvate + CO2. Functionally, catalyzes the aldol cleavage of 4-hydroxy-4-methyl-2-oxoglutarate (HMG) into 2 molecules of pyruvate. Also contains a secondary oxaloacetate (OAA) decarboxylase activity due to the common pyruvate enolate transition state formed following C-C bond cleavage in the retro-aldol and decarboxylation reactions. The sequence is that of Putative 4-hydroxy-4-methyl-2-oxoglutarate aldolase from Burkholderia multivorans (strain ATCC 17616 / 249).